We begin with the raw amino-acid sequence, 126 residues long: Large ribosomal subunit protein uL22 (126 aa).

This sequence belongs to the universal ribosomal protein uL22 family. As to quaternary structure, part of the 50S ribosomal subunit.

This protein binds specifically to 23S rRNA; its binding is stimulated by other ribosomal proteins, e.g. L4, L17, and L20. It is important during the early stages of 50S assembly. It makes multiple contacts with different domains of the 23S rRNA in the assembled 50S subunit and ribosome. In terms of biological role, the globular domain of the protein is located near the polypeptide exit tunnel on the outside of the subunit, while an extended beta-hairpin is found that lines the wall of the exit tunnel in the center of the 70S ribosome. This chain is Large ribosomal subunit protein uL22, found in Rhodospirillum rubrum (strain ATCC 11170 / ATH 1.1.1 / DSM 467 / LMG 4362 / NCIMB 8255 / S1).